We begin with the raw amino-acid sequence, 321 residues long: Ribose-phosphate pyrophosphokinase C (321 aa).

Mg(2+) is bound by residues Asp132 and Asp147. Positions 214-229 (SGKVAIIIGSIADTCE) are binding of phosphoribosylpyrophosphate.

The protein belongs to the ribose-phosphate pyrophosphokinase family. Mg(2+) serves as cofactor.

It is found in the cytoplasm. It carries out the reaction D-ribose 5-phosphate + ATP = 5-phospho-alpha-D-ribose 1-diphosphate + AMP + H(+). Its pathway is metabolic intermediate biosynthesis; 5-phospho-alpha-D-ribose 1-diphosphate biosynthesis; 5-phospho-alpha-D-ribose 1-diphosphate from D-ribose 5-phosphate (route I): step 1/1. This Dictyostelium discoideum (Social amoeba) protein is Ribose-phosphate pyrophosphokinase C (prsC).